Consider the following 271-residue polypeptide: Large ribosomal subunit protein eL8 (271 aa).

Belongs to the eukaryotic ribosomal protein eL8 family.

The polypeptide is Large ribosomal subunit protein eL8 (RpL7A) (Drosophila melanogaster (Fruit fly)).